Here is a 430-residue protein sequence, read N- to C-terminus: Serine--tRNA ligase (430 aa).

An L-serine-binding site is contributed by 235–237; that stretch reads TAE. Residues 266–268 and V282 each bind ATP; that span reads RRE. E289 contacts L-serine. 353–356 is a binding site for ATP; that stretch reads EASS. L-serine is bound at residue S389.

Belongs to the class-II aminoacyl-tRNA synthetase family. Type-1 seryl-tRNA synthetase subfamily. As to quaternary structure, homodimer. The tRNA molecule binds across the dimer.

The protein resides in the cytoplasm. It catalyses the reaction tRNA(Ser) + L-serine + ATP = L-seryl-tRNA(Ser) + AMP + diphosphate + H(+). The enzyme catalyses tRNA(Sec) + L-serine + ATP = L-seryl-tRNA(Sec) + AMP + diphosphate + H(+). It participates in aminoacyl-tRNA biosynthesis; selenocysteinyl-tRNA(Sec) biosynthesis; L-seryl-tRNA(Sec) from L-serine and tRNA(Sec): step 1/1. Functionally, catalyzes the attachment of serine to tRNA(Ser). Is also able to aminoacylate tRNA(Sec) with serine, to form the misacylated tRNA L-seryl-tRNA(Sec), which will be further converted into selenocysteinyl-tRNA(Sec). This Chlorobium phaeovibrioides (strain DSM 265 / 1930) (Prosthecochloris vibrioformis (strain DSM 265)) protein is Serine--tRNA ligase.